Consider the following 505-residue polypeptide: RNA-splicing ligase RtcB homolog (505 aa).

Mn(2+)-binding residues include aspartate 119, cysteine 122, histidine 227, and histidine 259. 226 to 230 is a binding site for GMP; it reads NHYAE. Serine 300 carries the phosphoserine modification. Histidine 353 provides a ligand contact to Mn(2+). GMP-binding positions include 353-354, 402-405, serine 409, and 428-431; these read HN, GGTM, and HGAG. The active-site GMP-histidine intermediate is histidine 428. A Glycyl lysine isopeptide (Lys-Gly) (interchain with G-Cter in SUMO2) cross-link involves residue lysine 496. GMP is bound at residue lysine 504.

Belongs to the RtcB family. In terms of assembly, catalytic component of the tRNA-splicing ligase complex. The cofactor is Mn(2+).

The protein localises to the nucleus. It is found in the cytoplasm. It catalyses the reaction a 3'-end 3'-phospho-ribonucleotide-RNA + a 5'-end dephospho-ribonucleoside-RNA + GTP = a ribonucleotidyl-ribonucleotide-RNA + GMP + diphosphate. The catalysed reaction is a 3'-end 2',3'-cyclophospho-ribonucleotide-RNA + a 5'-end dephospho-ribonucleoside-RNA + GTP + H2O = a ribonucleotidyl-ribonucleotide-RNA + GMP + diphosphate + H(+). In terms of biological role, catalytic subunit of the tRNA-splicing ligase complex that acts by directly joining spliced tRNA halves to mature-sized tRNAs by incorporating the precursor-derived splice junction phosphate into the mature tRNA as a canonical 3',5'-phosphodiester. May act as an RNA ligase with broad substrate specificity, and may function toward other RNAs. The chain is RNA-splicing ligase RtcB homolog from Sus scrofa (Pig).